Reading from the N-terminus, the 195-residue chain is Ion-translocating oxidoreductase complex subunit B (195 aa).

At 1 to 3 (MST) the chain is on the periplasmic side. Residues 4–24 (IVIAVIALAALAAVFGAILGF) traverse the membrane as a helical segment. Residues 25 to 195 (ASIRFKVEAD…SAPAAQKSAN (171 aa)) are Cytoplasmic-facing. The 4Fe-4S domain maps to 32-90 (EADPIVDQIDAILPQTQCGQCGYPGCRPYAEAIANGDAINKCPPGGQATIEKLADLMGV). Cys49, Cys52, Cys57, Cys73, Cys114, Cys117, Cys120, Cys124, Cys144, Cys147, Cys150, and Cys154 together coordinate [4Fe-4S] cluster. 4Fe-4S ferredoxin-type domains lie at 105–134 (MVAF…GGNK) and 135–164 (AVHT…MIPV).

The protein belongs to the 4Fe4S bacterial-type ferredoxin family. RnfB subfamily. The complex is composed of six subunits: RnfA, RnfB, RnfC, RnfD, RnfE and RnfG. It depends on [4Fe-4S] cluster as a cofactor.

The protein resides in the cell inner membrane. In terms of biological role, part of a membrane-bound complex that couples electron transfer with translocation of ions across the membrane. This chain is Ion-translocating oxidoreductase complex subunit B, found in Vibrio cholerae serotype O1 (strain ATCC 39541 / Classical Ogawa 395 / O395).